We begin with the raw amino-acid sequence, 313 residues long: Homoserine O-succinyltransferase (313 aa).

C142 (acyl-thioester intermediate) is an active-site residue. Substrate contacts are provided by K163 and S192. The active-site Proton acceptor is the H235. E237 is an active-site residue. Residue R249 coordinates substrate.

This sequence belongs to the MetA family.

The protein resides in the cytoplasm. It carries out the reaction L-homoserine + succinyl-CoA = O-succinyl-L-homoserine + CoA. It functions in the pathway amino-acid biosynthesis; L-methionine biosynthesis via de novo pathway; O-succinyl-L-homoserine from L-homoserine: step 1/1. In terms of biological role, transfers a succinyl group from succinyl-CoA to L-homoserine, forming succinyl-L-homoserine. The protein is Homoserine O-succinyltransferase of Shewanella sp. (strain ANA-3).